Consider the following 225-residue polypeptide: NAD(P)H-quinone oxidoreductase subunit K, chloroplastic (225 aa).

Cysteine 43, cysteine 44, cysteine 108, and cysteine 139 together coordinate [4Fe-4S] cluster.

The protein belongs to the complex I 20 kDa subunit family. As to quaternary structure, NDH is composed of at least 16 different subunits, 5 of which are encoded in the nucleus. [4Fe-4S] cluster serves as cofactor.

It is found in the plastid. It localises to the chloroplast thylakoid membrane. It carries out the reaction a plastoquinone + NADH + (n+1) H(+)(in) = a plastoquinol + NAD(+) + n H(+)(out). The catalysed reaction is a plastoquinone + NADPH + (n+1) H(+)(in) = a plastoquinol + NADP(+) + n H(+)(out). Its function is as follows. NDH shuttles electrons from NAD(P)H:plastoquinone, via FMN and iron-sulfur (Fe-S) centers, to quinones in the photosynthetic chain and possibly in a chloroplast respiratory chain. The immediate electron acceptor for the enzyme in this species is believed to be plastoquinone. Couples the redox reaction to proton translocation, and thus conserves the redox energy in a proton gradient. The chain is NAD(P)H-quinone oxidoreductase subunit K, chloroplastic from Nymphaea alba (White water-lily).